The primary structure comprises 304 residues: MRKNESSLTSLISAFARAYHSRYDTPLIFDDFIAKDLINEKEFIDISKNMIQEISFFNKEIAERLQNDPEKILKWVAQIQLSPTPLARASYCEKVLHNELILGAKQYVILGAGLDTFCFRHPELENSLQVFEVDHPATQQLKKNKLKDANLTIPGHLHFVPMDFTKTFSYDPLLDEGFKNTKTFFSLLGVSYYVTREENASLISNLFSHVPPGSSIVFDYADETLFTAKGTSNRVEHMVKMAAASGEPMKSCFTYQEIEHLLESSGLLIYEHLSPDDINDLFFSNRKDNLSAFETIHYIHAVKK.

S-adenosyl-L-methionine contacts are provided by residues Asp-134 and 163–164 (DF).

The protein belongs to the UPF0677 family.

Its function is as follows. May be involved in polyketide synthesis. The protein is Putative S-adenosyl-L-methionine-dependent methyltransferase YktD (yktD) of Bacillus subtilis (strain 168).